The following is a 229-amino-acid chain: MDLLQFLAAFSVLLWPGTEVTGALKSTLDPSLKIYKKMFEVKRREQLLALKNLAQLNDIHQQYKILDVMLKGLFKVLEDSRTVLIAADVLPDGPVPQDEKLKDAFSHVVENTAFFGDVVLRFPKIVHHYFDHNSNWNLLIRWGISFCNQTGVFDQGPHSPILSLMAQELGITEKDSDFRNPFKTDQTEFIPSTDPFQKALREEEKRRKKEERRKEIRKGPRISRSQSEL.

A signal peptide spans 1-22 (MDLLQFLAAFSVLLWPGTEVTG). N-linked (GlcNAc...) asparagine glycosylation occurs at Asn148. Residues 182–229 (FKTDQTEFIPSTDPFQKALREEEKRRKKEERRKEIRKGPRISRSQSEL) are disordered. Residues 196-218 (FQKALREEEKRRKKEERRKEIRK) are a coiled coil. The Prevents secretion from ER motif lies at 226 to 229 (QSEL).

Belongs to the CCDC134 family. As to quaternary structure, interacts with TADA2A. Associates with the PCAF complex via TADA2A binding. Post-translationally, O-glycosylated, with additional sialic acid modifications.

The protein localises to the endoplasmic reticulum lumen. It localises to the secreted. It is found in the cytoplasm. The protein resides in the nucleus. Its function is as follows. Molecular adapter required to prevent protein hyperglycosylation of HSP90B1: during translation, associates with nascent HSP90B1 and the STT3A catalytic component of the OST-A complex and tethers them to a specialized translocon that forms a microenvironment for HSP90B1 folding. In the CCDC134-containing translocon, STT3A associates with the SRT pseudosubstrate motif of HSP90B1, preventing access to facultative glycosylation sites until folding is completed, preventing hyperglycosylation and subsequent degradation of HSP90B1. In extracellular secreted form, promotes proliferation and activation of CD8(+) T-cells, suggesting a cytokine-like function. May inhibit ERK and JNK signaling activity. May suppress cell migration and invasion activity, via its effects on ERK and JNK signaling. May also localize in the nucleus: enhances stability of the PCAF histone acetyltransferase (HAT) complex member TADA2A and thus promotes PCAF-mediated histone acetyltransferase activity. Has a critical role in the regulation of osteogenesis and bone development. This chain is Coiled-coil domain-containing protein 134 (Ccdc134), found in Mus musculus (Mouse).